The following is a 300-amino-acid chain: L-threonine kinase (300 aa).

Residue 92-102 coordinates ATP; it reads PVAKGMASSTA.

This sequence belongs to the GHMP kinase family. PduX subfamily.

The protein resides in the cytoplasm. The catalysed reaction is L-threonine + ATP = O-phospho-L-threonine + ADP + H(+). Its pathway is cofactor biosynthesis; adenosylcobalamin biosynthesis. The protein operates within polyol metabolism; 1,2-propanediol degradation. L-threonine kinase that catalyzes the conversion of L-threonine to L-threonine-O-3-phosphate. Involved in the de novo synthesis of adenosylcobalamin (coenzyme B12) and the assimilation of cobyric acid. Uses ATP; the activity with CTP, GTP or UTP is 6, 11, and 3% of the activity with ATP, respectively. Its function is as follows. The 1,2-propanediol (1,2-PD)-specific bacterial microcompartment (BMC) concentrates low levels of 1,2-PD catabolic enzymes, concentrates volatile reaction intermediates thus enhancing pathway flux and keeps the level of toxic, mutagenic propionaldehyde low. This gene probably benefits from its induction via the Pdu promoter, rather than a physical interaction with the BMC. The protein is L-threonine kinase of Salmonella typhimurium (strain LT2 / SGSC1412 / ATCC 700720).